The chain runs to 158 residues: NAD(P)H-quinone oxidoreductase subunit J, chloroplastic (158 aa).

Belongs to the complex I 30 kDa subunit family. NDH is composed of at least 16 different subunits, 5 of which are encoded in the nucleus.

The protein localises to the plastid. The protein resides in the chloroplast thylakoid membrane. The catalysed reaction is a plastoquinone + NADH + (n+1) H(+)(in) = a plastoquinol + NAD(+) + n H(+)(out). It carries out the reaction a plastoquinone + NADPH + (n+1) H(+)(in) = a plastoquinol + NADP(+) + n H(+)(out). Functionally, NDH shuttles electrons from NAD(P)H:plastoquinone, via FMN and iron-sulfur (Fe-S) centers, to quinones in the photosynthetic chain and possibly in a chloroplast respiratory chain. The immediate electron acceptor for the enzyme in this species is believed to be plastoquinone. Couples the redox reaction to proton translocation, and thus conserves the redox energy in a proton gradient. In Helianthus annuus (Common sunflower), this protein is NAD(P)H-quinone oxidoreductase subunit J, chloroplastic.